The following is a 317-amino-acid chain: Ornithine carbamoyltransferase (317 aa).

Residues 57–60 (STRT), Gln84, Arg108, and 135–138 (HPCQ) contribute to the carbamoyl phosphate site. L-ornithine contacts are provided by residues Asn166, Asp230, and 234 to 235 (SM). Residues 270–271 (CL) and Arg298 each bind carbamoyl phosphate.

Belongs to the aspartate/ornithine carbamoyltransferase superfamily. OTCase family. In terms of assembly, homododecamer.

It is found in the cytoplasm. It carries out the reaction carbamoyl phosphate + L-ornithine = L-citrulline + phosphate + H(+). It functions in the pathway amino-acid biosynthesis; L-arginine biosynthesis; L-arginine from L-ornithine and carbamoyl phosphate: step 1/3. Functionally, reversibly catalyzes the transfer of the carbamoyl group from carbamoyl phosphate (CP) to the N(epsilon) atom of ornithine (ORN) to produce L-citrulline. The sequence is that of Ornithine carbamoyltransferase from Pyrococcus horikoshii (strain ATCC 700860 / DSM 12428 / JCM 9974 / NBRC 100139 / OT-3).